Here is a 348-residue protein sequence, read N- to C-terminus: Phosphoribosylformylglycinamidine cyclo-ligase (348 aa).

It belongs to the AIR synthase family.

The protein localises to the cytoplasm. It catalyses the reaction 2-formamido-N(1)-(5-O-phospho-beta-D-ribosyl)acetamidine + ATP = 5-amino-1-(5-phospho-beta-D-ribosyl)imidazole + ADP + phosphate + H(+). The protein operates within purine metabolism; IMP biosynthesis via de novo pathway; 5-amino-1-(5-phospho-D-ribosyl)imidazole from N(2)-formyl-N(1)-(5-phospho-D-ribosyl)glycinamide: step 2/2. This chain is Phosphoribosylformylglycinamidine cyclo-ligase, found in Cereibacter sphaeroides (strain ATCC 17025 / ATH 2.4.3) (Rhodobacter sphaeroides).